The following is a 182-amino-acid chain: Ribosome-recycling factor (182 aa).

It belongs to the RRF family.

The protein resides in the cytoplasm. Its function is as follows. Responsible for the release of ribosomes from messenger RNA at the termination of protein biosynthesis. May increase the efficiency of translation by recycling ribosomes from one round of translation to another. The protein is Ribosome-recycling factor of Prochlorococcus marinus (strain MIT 9312).